Consider the following 918-residue polypeptide: UPF0182 protein CPF_0011 (918 aa).

Helical transmembrane passes span 8–28 (TVLI…NFII), 46–66 (LIAI…VIAI), 91–111 (FLLS…TTQW), 151–171 (AISL…ALGF), 200–220 (LAVL…LKSY), 243–263 (IFYK…FISI), and 271–291 (IIIS…VAIF). Residues 857 to 869 (EENKNSNKDETPK) are compositionally biased toward basic and acidic residues. A disordered region spans residues 857–876 (EENKNSNKDETPKNEITSDN).

Belongs to the UPF0182 family.

It localises to the cell membrane. In Clostridium perfringens (strain ATCC 13124 / DSM 756 / JCM 1290 / NCIMB 6125 / NCTC 8237 / Type A), this protein is UPF0182 protein CPF_0011.